A 325-amino-acid chain; its full sequence is Protease HtpX homolog (325 aa).

A helical membrane pass occupies residues 20–40 (IGYLLGGGGGMMIALVIAVAM). Residue H130 participates in Zn(2+) binding. E131 is an active-site residue. A Zn(2+)-binding site is contributed by H134. 2 consecutive transmembrane segments (helical) span residues 145 to 165 (IVAT…FLGG) and 173 to 193 (VMGV…AMIV). Zn(2+) is bound at residue E202. Residues 288-325 (AMTARAAAPSQNSGPWGQRSDNAGGNSNGGSRYRGPWS) form a disordered region. The segment covering 306–325 (RSDNAGGNSNGGSRYRGPWS) has biased composition (low complexity).

The protein belongs to the peptidase M48B family. The cofactor is Zn(2+).

It is found in the cell inner membrane. This is Protease HtpX homolog from Brucella abortus (strain S19).